Here is a 525-residue protein sequence, read N- to C-terminus: Peptide chain release factor 3 (525 aa).

The 268-residue stretch at 9 to 276 folds into the tr-type G domain; the sequence is AKRRTFAIIS…GFTRYAPAPQ (268 aa). GTP-binding positions include 18-25, 86-90, and 140-143; these read SHPDAGKT, DTPGH, and NKFD.

Belongs to the TRAFAC class translation factor GTPase superfamily. Classic translation factor GTPase family. PrfC subfamily.

It is found in the cytoplasm. In terms of biological role, increases the formation of ribosomal termination complexes and stimulates activities of RF-1 and RF-2. It binds guanine nucleotides and has strong preference for UGA stop codons. It may interact directly with the ribosome. The stimulation of RF-1 and RF-2 is significantly reduced by GTP and GDP, but not by GMP. This chain is Peptide chain release factor 3, found in Francisella tularensis subsp. mediasiatica (strain FSC147).